The sequence spans 256 residues: Ubiquinone/menaquinone biosynthesis C-methyltransferase UbiE (256 aa).

S-adenosyl-L-methionine-binding positions include threonine 79, aspartate 100, and 128-129; that span reads DA.

Belongs to the class I-like SAM-binding methyltransferase superfamily. MenG/UbiE family.

It catalyses the reaction a 2-demethylmenaquinol + S-adenosyl-L-methionine = a menaquinol + S-adenosyl-L-homocysteine + H(+). The enzyme catalyses a 2-methoxy-6-(all-trans-polyprenyl)benzene-1,4-diol + S-adenosyl-L-methionine = a 5-methoxy-2-methyl-3-(all-trans-polyprenyl)benzene-1,4-diol + S-adenosyl-L-homocysteine + H(+). The protein operates within quinol/quinone metabolism; menaquinone biosynthesis; menaquinol from 1,4-dihydroxy-2-naphthoate: step 2/2. It participates in cofactor biosynthesis; ubiquinone biosynthesis. In terms of biological role, methyltransferase required for the conversion of demethylmenaquinol (DMKH2) to menaquinol (MKH2) and the conversion of 2-polyprenyl-6-methoxy-1,4-benzoquinol (DDMQH2) to 2-polyprenyl-3-methyl-6-methoxy-1,4-benzoquinol (DMQH2). The protein is Ubiquinone/menaquinone biosynthesis C-methyltransferase UbiE of Ectopseudomonas mendocina (strain ymp) (Pseudomonas mendocina).